Here is a 307-residue protein sequence, read N- to C-terminus: 4-hydroxythreonine-4-phosphate dehydrogenase (307 aa).

Substrate-binding residues include His-126 and Thr-127. His-156, His-195, and His-251 together coordinate a divalent metal cation. 3 residues coordinate substrate: Lys-259, Asn-268, and Arg-277.

It belongs to the PdxA family. In terms of assembly, homodimer. Requires Zn(2+) as cofactor. It depends on Mg(2+) as a cofactor. Co(2+) serves as cofactor.

It localises to the cytoplasm. It carries out the reaction 4-(phosphooxy)-L-threonine + NAD(+) = 3-amino-2-oxopropyl phosphate + CO2 + NADH. The protein operates within cofactor biosynthesis; pyridoxine 5'-phosphate biosynthesis; pyridoxine 5'-phosphate from D-erythrose 4-phosphate: step 4/5. In terms of biological role, catalyzes the NAD(P)-dependent oxidation of 4-(phosphooxy)-L-threonine (HTP) into 2-amino-3-oxo-4-(phosphooxy)butyric acid which spontaneously decarboxylates to form 3-amino-2-oxopropyl phosphate (AHAP). The protein is 4-hydroxythreonine-4-phosphate dehydrogenase of Helicobacter pylori (strain ATCC 700392 / 26695) (Campylobacter pylori).